A 156-amino-acid chain; its full sequence is 17.4 kDa class I heat shock protein (156 aa).

In terms of domain architecture, sHSP spans 42–156 (DVAAFTNAKV…PEVKSVDISG (115 aa)).

This sequence belongs to the small heat shock protein (HSP20) family. May form oligomeric structures. Binds to AKR2A.

Its subcellular location is the cytoplasm. This Arabidopsis thaliana (Mouse-ear cress) protein is 17.4 kDa class I heat shock protein (HSP17.4A).